Here is a 65-residue protein sequence, read N- to C-terminus: Gallinacin-1 alpha (65 aa).

The N-terminal stretch at 1-19 (MRIVYLLLPFILLLAQGAA) is a signal peptide. The propeptide occupies 20 to 25 (GSSQAL). 3 disulfides stabilise this stretch: Cys31-Cys59, Cys38-Cys53, and Cys43-Cys60.

Belongs to the beta-defensin family.

It is found in the secreted. The protein localises to the cytoplasmic granule. Functionally, has bactericidal activity. Potent activity against E.coli ML-35, L.monocytogenes EGD and C.albicans. In Gallus gallus (Chicken), this protein is Gallinacin-1 alpha.